A 255-amino-acid polypeptide reads, in one-letter code: Putative cysteine-rich repeat secretory protein 32 (255 aa).

Residues 1 to 28 (MYSSYSLFKCLVCFYILGIQVLIHSVSS) form the signal peptide. Gnk2-homologous domains lie at 35–136 (YLHH…TINS) and 143–252 (YENT…LYPF).

The protein belongs to the cysteine-rich repeat secretory protein family.

It localises to the secreted. The chain is Putative cysteine-rich repeat secretory protein 32 (CRRSP32) from Arabidopsis thaliana (Mouse-ear cress).